Consider the following 908-residue polypeptide: MVCEGKRSTSCPCFFLLTAKFYWILTMMQRTHSQEYAHSIRLDGDIILGGLFPVHAKGERGVPCGDLKKEKGIHRLEAMLYAIDQINKDPDLLSNITLGVRILDTCSRDTYALEQSLTFVQALIEKDASDVKCANGDPPIFTKPDKISGVIGAAASSVSIMVANILRLFKIPQISYASTAPELSDNTRYDFFSRVVPPDSYQAQAMVDIVTALGWNYVSTLASEGNYGESGVEAFTQISREIGGVCIAQSQKIPREPRPGEFEKIIKRLLETPNARAVIMFANEDDIRRILEAAKKLNQSGHFLWIGSDSWGSKIAPVYQQEEIAEGAVTILPKRASIDGFDRYFRSRTLANNRRNVWFAEFWEENFGCKLGSHGKRNSHIKKCTGLERIARDSSYEQEGKVQFVIDAVYSMAYALHNMHKELCPGYIGLCPRMVTIDGKELLGYIRAVNFNGSAGTPVTFNENGDAPGRYDIFQYQINNKSTEYKIIGHWTNQLHLKVEDMQWANREHTHPASVCSLPCKPGERKKTVKGVPCCWHCERCEGYNYQVDELSCELCPLDQRPNINRTGCQRIPIIKLEWHSPWAVVPVFIAILGIIATTFVIVTFVRYNDTPIVRASGRELSYVLLTGIFLCYSITFLMIAAPDTIICSFRRIFLGLGMCFSYAALLTKTNRIHRIFEQGKKSVTAPKFISPASQLVITFSLISVQLLGVFVWFVVDPPHTIIDYGEQRTLDPENARGVLKCDISDLSLICSLGYSILLMVTCTVYAIKTRGVPETFNEAKPIGFTMYTTCIIWLAFIPIFFGTAQSAEKMYIQTTTLTVSMSLSASVSLGMLYMPKVYIIIFHPEQNVQKRKRSFKAVVTAATMQSKLIQKGNDRPNGEVKSELCESLETNTSSTKTTYISYSNHSI.

Residues 1–33 (MVCEGKRSTSCPCFFLLTAKFYWILTMMQRTHS) form the signal peptide. Residues 34 to 583 (QEYAHSIRLD…IIKLEWHSPW (550 aa)) are Extracellular-facing. A disulfide bridge connects residues Cys64 and Cys106. N-linked (GlcNAc...) asparagine glycosylation is present at Asn95. Residues Ser156, 177–179 (AST), and Tyr227 contribute to the L-glutamate site. Cystine bridges form between Cys246–Cys534, Cys369–Cys384, Cys424–Cys431, Cys516–Cys535, Cys520–Cys538, Cys541–Cys553, and Cys556–Cys569. N-linked (GlcNAc...) asparagine glycosylation is present at Asn298. Asp309 provides a ligand contact to L-glutamate. Residue Lys401 coordinates L-glutamate. N-linked (GlcNAc...) asparagine glycosylation is found at Asn452 and Asn480. N-linked (GlcNAc...) asparagine glycosylation is present at Asn565. The helical transmembrane segment at 584–608 (AVVPVFIAILGIIATTFVIVTFVRY) threads the bilayer. Over 609–620 (NDTPIVRASGRE) the chain is Cytoplasmic. The helical transmembrane segment at 621–641 (LSYVLLTGIFLCYSITFLMIA) threads the bilayer. Topologically, residues 642–647 (APDTII) are extracellular. Residues 648–668 (CSFRRIFLGLGMCFSYAALLT) form a helical membrane-spanning segment. Residues 669–695 (KTNRIHRIFEQGKKSVTAPKFISPASQ) lie on the Cytoplasmic side of the membrane. The chain crosses the membrane as a helical span at residues 696-716 (LVITFSLISVQLLGVFVWFVV). The Extracellular segment spans residues 717–746 (DPPHTIIDYGEQRTLDPENARGVLKCDISD). A helical transmembrane segment spans residues 747-768 (LSLICSLGYSILLMVTCTVYAI). The Cytoplasmic segment spans residues 769–781 (KTRGVPETFNEAK). A helical membrane pass occupies residues 782 to 803 (PIGFTMYTTCIIWLAFIPIFFG). Residues 804–818 (TAQSAEKMYIQTTTL) lie on the Extracellular side of the membrane. The chain crosses the membrane as a helical span at residues 819–843 (TVSMSLSASVSLGMLYMPKVYIIIF). Topologically, residues 844 to 908 (HPEQNVQKRK…TYISYSNHSI (65 aa)) are cytoplasmic. A Glycyl lysine isopeptide (Lys-Gly) (interchain with G-Cter in SUMO1) cross-link involves residue Lys882.

It belongs to the G-protein coupled receptor 3 family. As to quaternary structure, interacts with PICK1. Strongly expressed in olfactory bulb, accessory olfactory bulb, and mammillary body. Weaker expression in the retina, and in scattered cells in the cortex and hindbrain.

The protein resides in the cell membrane. Functionally, G-protein coupled receptor for glutamate. Ligand binding causes a conformation change that triggers signaling via guanine nucleotide-binding proteins (G proteins) and modulates the activity of down-stream effectors. Signaling inhibits adenylate cyclase activity. This chain is Metabotropic glutamate receptor 8 (Grm8), found in Mus musculus (Mouse).